The following is a 36-amino-acid chain: Photosystem II reaction center protein Psb30 (36 aa).

The chain crosses the membrane as a helical span at residues 8-28 (IIAQLTVVTLTLLAGPVIVFL).

Belongs to the Psb30/Ycf12 family. As to quaternary structure, PSII is composed of 1 copy each of membrane proteins PsbA, PsbB, PsbC, PsbD, PsbE, PsbF, PsbH, PsbI, PsbJ, PsbK, PsbL, PsbM, PsbT, PsbX, PsbY, PsbZ, Psb30/Ycf12, peripheral proteins of the oxygen-evolving complex and a large number of cofactors. It forms dimeric complexes.

The protein resides in the plastid. The protein localises to the cyanelle thylakoid membrane. Functionally, a core subunit of photosystem II (PSII), probably helps stabilize the reaction center. This is Photosystem II reaction center protein Psb30 from Cyanophora paradoxa.